The primary structure comprises 467 residues: UDP-glycosyltransferase 71D2 (467 aa).

Residues Ser283, Ser339–Gln341, His356–Glu364, and Tyr378–Gln381 each bind UDP-alpha-D-glucose.

This sequence belongs to the UDP-glycosyltransferase family.

The chain is UDP-glycosyltransferase 71D2 (UGT71D2) from Arabidopsis thaliana (Mouse-ear cress).